We begin with the raw amino-acid sequence, 552 residues long: Urocanate hydratase (552 aa).

Residues Gly49 to Gly50, Gln127, Gly173 to Gly175, Asp193, Asn239 to Ala240, Gln260 to His264, Tyr270 to Ile271, and Tyr319 contribute to the NAD(+) site. Cys407 is an active-site residue. An NAD(+)-binding site is contributed by Gly489.

This sequence belongs to the urocanase family. NAD(+) is required as a cofactor.

Its subcellular location is the cytoplasm. The catalysed reaction is 4-imidazolone-5-propanoate = trans-urocanate + H2O. It participates in amino-acid degradation; L-histidine degradation into L-glutamate; N-formimidoyl-L-glutamate from L-histidine: step 2/3. Its function is as follows. Catalyzes the conversion of urocanate to 4-imidazolone-5-propionate. In Bacillus thuringiensis (strain Al Hakam), this protein is Urocanate hydratase.